We begin with the raw amino-acid sequence, 211 residues long: Peptidyl-tRNA hydrolase (211 aa).

Tyr-15 is a binding site for tRNA. His-20 functions as the Proton acceptor in the catalytic mechanism. 3 residues coordinate tRNA: Phe-66, Asn-68, and Asn-114. Positions 189 to 211 (TKPPRPKATRPAQAQAAPQAGAD) are disordered. A compositionally biased stretch (low complexity) spans 197 to 211 (TRPAQAQAAPQAGAD).

Belongs to the PTH family. Monomer.

It localises to the cytoplasm. It carries out the reaction an N-acyl-L-alpha-aminoacyl-tRNA + H2O = an N-acyl-L-amino acid + a tRNA + H(+). Its function is as follows. Hydrolyzes ribosome-free peptidyl-tRNAs (with 1 or more amino acids incorporated), which drop off the ribosome during protein synthesis, or as a result of ribosome stalling. Functionally, catalyzes the release of premature peptidyl moieties from peptidyl-tRNA molecules trapped in stalled 50S ribosomal subunits, and thus maintains levels of free tRNAs and 50S ribosomes. This chain is Peptidyl-tRNA hydrolase, found in Acidovorax ebreus (strain TPSY) (Diaphorobacter sp. (strain TPSY)).